The primary structure comprises 499 residues: Bifunctional purine biosynthesis protein PurH (499 aa).

One can recognise an MGS-like domain in the interval 1–144; it reads MIKRALISVF…KNFKDVVVLT (144 aa).

This sequence belongs to the PurH family.

The enzyme catalyses (6R)-10-formyltetrahydrofolate + 5-amino-1-(5-phospho-beta-D-ribosyl)imidazole-4-carboxamide = 5-formamido-1-(5-phospho-D-ribosyl)imidazole-4-carboxamide + (6S)-5,6,7,8-tetrahydrofolate. It catalyses the reaction IMP + H2O = 5-formamido-1-(5-phospho-D-ribosyl)imidazole-4-carboxamide. It participates in purine metabolism; IMP biosynthesis via de novo pathway; 5-formamido-1-(5-phospho-D-ribosyl)imidazole-4-carboxamide from 5-amino-1-(5-phospho-D-ribosyl)imidazole-4-carboxamide (10-formyl THF route): step 1/1. The protein operates within purine metabolism; IMP biosynthesis via de novo pathway; IMP from 5-formamido-1-(5-phospho-D-ribosyl)imidazole-4-carboxamide: step 1/1. This chain is Bifunctional purine biosynthesis protein PurH, found in Clostridium botulinum (strain Kyoto / Type A2).